The primary structure comprises 341 residues: UDP-glucose 4-epimerase (341 aa).

It belongs to the polysaccharide synthase family.

The catalysed reaction is UDP-alpha-D-glucose = UDP-alpha-D-galactose. Epimerizes UDP-galactose to UDP-glucose. The protein is UDP-glucose 4-epimerase (capD) of Rickettsia typhi (strain ATCC VR-144 / Wilmington).